Consider the following 284-residue polypeptide: Bifunctional protein FolD (284 aa).

NADP(+) is bound by residues 165–167 and serine 190; that span reads GRS.

It belongs to the tetrahydrofolate dehydrogenase/cyclohydrolase family. Homodimer.

It catalyses the reaction (6R)-5,10-methylene-5,6,7,8-tetrahydrofolate + NADP(+) = (6R)-5,10-methenyltetrahydrofolate + NADPH. The enzyme catalyses (6R)-5,10-methenyltetrahydrofolate + H2O = (6R)-10-formyltetrahydrofolate + H(+). It participates in one-carbon metabolism; tetrahydrofolate interconversion. Functionally, catalyzes the oxidation of 5,10-methylenetetrahydrofolate to 5,10-methenyltetrahydrofolate and then the hydrolysis of 5,10-methenyltetrahydrofolate to 10-formyltetrahydrofolate. This is Bifunctional protein FolD from Streptococcus uberis (strain ATCC BAA-854 / 0140J).